Here is a 207-residue protein sequence, read N- to C-terminus: ADP-ribosylation factor (207 aa).

Gly2 carries N-myristoyl glycine lipidation. GTP-binding positions include 32-39 (GLDGAGKT), 75-79 (DIGGQ), and 133-136 (NKID).

It belongs to the small GTPase superfamily. Arf family.

The protein resides in the golgi apparatus. Its function is as follows. GTP-binding protein involved in protein trafficking; may modulate vesicle budding and uncoating within the Golgi apparatus. This is ADP-ribosylation factor (ARF-1) from Encephalitozoon cuniculi (strain GB-M1) (Microsporidian parasite).